Here is a 78-residue protein sequence, read N- to C-terminus: MAAHCQVTGAEPGFGHSISHSHRRNKRRFDPNIQKKRYWVPSLRRNVTLTLSARGIKTIDVRGIDSVVADILARGVKL.

Residues 1–31 (MAAHCQVTGAEPGFGHSISHSHRRNKRRFDP) form a disordered region.

Belongs to the bacterial ribosomal protein bL28 family.

This chain is Large ribosomal subunit protein bL28, found in Paenarthrobacter aurescens (strain TC1).